An 89-amino-acid polypeptide reads, in one-letter code: MALTAEQKKEILGQYGLHESDTGSPEAQVALLTKRISDLTEHLKQHKHDHHSRRGLLLLVGRRRRLLKYVAQVDVERYRSLIERLGLRR.

The protein belongs to the universal ribosomal protein uS15 family. In terms of assembly, part of the 30S ribosomal subunit. Forms a bridge to the 50S subunit in the 70S ribosome, contacting the 23S rRNA.

In terms of biological role, one of the primary rRNA binding proteins, it binds directly to 16S rRNA where it helps nucleate assembly of the platform of the 30S subunit by binding and bridging several RNA helices of the 16S rRNA. Forms an intersubunit bridge (bridge B4) with the 23S rRNA of the 50S subunit in the ribosome. The protein is Small ribosomal subunit protein uS15 of Mycobacterium sp. (strain JLS).